The following is a 226-amino-acid chain: Elongation factor 1-delta 2 (226 aa).

The disordered stretch occupies residues 82–131 (TACSVSPTADQKAPAADEEDDDDVDLFGEETEEEKKAAEERAAAVKASGK). The segment covering 97-113 (ADEEDDDDVDLFGEETE) has biased composition (acidic residues). Basic and acidic residues predominate over residues 114-124 (EEKKAAEERAA).

This sequence belongs to the EF-1-beta/EF-1-delta family. As to quaternary structure, EF-1 is composed of 4 subunits: alpha, beta (1B-alpha=beta'), delta (1B-beta), and gamma (1B-gamma).

In terms of biological role, EF-1-beta and EF-1-beta' stimulate the exchange of GDP bound to EF-1-alpha to GTP. The chain is Elongation factor 1-delta 2 from Oryza sativa subsp. japonica (Rice).